The sequence spans 1576 residues: Calmodulin-regulated spectrin-associated protein 1 (1576 aa).

Positions 217–332 (ESPSHPKVRY…FIAELFWWFE (116 aa)) constitute a Calponin-homology (CH) domain. Disordered stretches follow at residues 415-447 (HPLL…TRAD), 549-572 (DLEL…RRPA), 595-653 (KEKH…LESD), and 811-852 (YETK…QNRD). A compositionally biased stretch (basic and acidic residues) spans 428–439 (VKPEESLNHRDQ). Low complexity predominate over residues 554–566 (SVSSRASSQMSTS). Residues 595-611 (KEKHMVPKSEEYGEGKQ) show a composition bias toward basic and acidic residues. 2 stretches are compositionally biased toward polar residues: residues 613–626 (GFSS…NQSF) and 642–651 (RTFTPLSSLE). Residues 813–824 (TKSSTSSSQKTT) are compositionally biased toward low complexity. Over residues 840–852 (QRREQSPGRQNRD) the composition is skewed to basic and acidic residues. Coiled coils occupy residues 857 to 889 (LASE…SARQ) and 992 to 1022 (DVNE…QQQE). Disordered regions lie at residues 1108–1149 (LKSV…RLHN), 1178–1236 (SSRV…ISDD), and 1274–1422 (RLRK…DWEN). Residues 1116-1131 (SPSVPTEESPVEVVPE) show a composition bias toward low complexity. Over residues 1178–1189 (SSRVAGVSTSES) the composition is skewed to polar residues. 3 stretches are compositionally biased toward basic and acidic residues: residues 1195-1204 (VPVDERHKSS), 1225-1236 (HPEKTKDIISDD), and 1274-1323 (RLRK…KQEQ). A coiled-coil region spans residues 1254–1315 (ELAKKRAAFL…KARRELIKQE (62 aa)). Residues 1333–1346 (PKPKPKSKKTRPKS) show a composition bias toward basic residues. The span at 1354 to 1366 (SDSGTKYSSTPDN) shows a compositional bias: polar residues. Residues 1367–1382 (LSSAQSGSSLSLASGA) are compositionally biased toward low complexity. A compositionally biased stretch (polar residues) spans 1383–1394 (TTEAESVHSGGT). The region spanning 1437 to 1571 (GPKLYKEPSS…QAKRPALPKK (135 aa)) is the CKK domain.

It belongs to the CAMSAP1 family.

It localises to the cytoplasm. The protein resides in the cytoskeleton. Functionally, key microtubule-organizing protein that specifically binds the minus-end of non-centrosomal microtubules and regulates their dynamics and organization. Specifically recognizes growing microtubule minus-ends and stabilizes microtubules. Acts on free microtubule minus-ends that are not capped by microtubule-nucleating proteins or other factors and protects microtubule minus-ends from depolymerization. In contrast to camsap2 and camsap3, tracks along the growing tips of minus-end microtubules without significantly affecting the polymerization rate: binds at the very tip of the microtubules minus-end and acts as a minus-end tracking protein (-TIP) that dissociates from microtubules after allowing tubulin incorporation. Through interaction with spectrin may regulate neurite outgrowth. The sequence is that of Calmodulin-regulated spectrin-associated protein 1 (camsap1) from Xenopus laevis (African clawed frog).